Here is a 20-residue protein sequence, read N- to C-terminus: Alpha-1B-glycoprotein (20 aa).

The segment at 1–20 is disordered; sequence AVVFDPQPALWAEADTQLEP.

Interacts with CRISP3. Glycosylated. In terms of tissue distribution, plasma.

It localises to the secreted. This is Alpha-1B-glycoprotein (A1BG) from Equus asinus (Donkey).